Here is a 236-residue protein sequence, read N- to C-terminus: 2-C-methyl-D-erythritol 4-phosphate cytidylyltransferase (236 aa).

The protein belongs to the IspD/TarI cytidylyltransferase family. IspD subfamily. In terms of assembly, homodimer.

It catalyses the reaction 2-C-methyl-D-erythritol 4-phosphate + CTP + H(+) = 4-CDP-2-C-methyl-D-erythritol + diphosphate. It participates in isoprenoid biosynthesis; isopentenyl diphosphate biosynthesis via DXP pathway; isopentenyl diphosphate from 1-deoxy-D-xylulose 5-phosphate: step 2/6. Its function is as follows. Catalyzes the formation of 4-diphosphocytidyl-2-C-methyl-D-erythritol from CTP and 2-C-methyl-D-erythritol 4-phosphate (MEP). The sequence is that of 2-C-methyl-D-erythritol 4-phosphate cytidylyltransferase from Salmonella arizonae (strain ATCC BAA-731 / CDC346-86 / RSK2980).